Reading from the N-terminus, the 387-residue chain is Diphthine methyltransferase (387 aa).

WD repeat units follow at residues 62–102 (NTYG…KDDF), 119–159 (EKDV…VQFT), 195–237 (PHEL…FIWS), 241–286 (IHDA…ESIF), and 357–387 (GHDS…TWIV).

This sequence belongs to the DPH7 family. Interacts with CAN1 and RTT10.

The protein resides in the cytoplasm. The protein localises to the endosome. The catalysed reaction is diphthine methyl ester-[translation elongation factor 2] + H2O = diphthine-[translation elongation factor 2] + methanol + H(+). Its pathway is protein modification; peptidyl-diphthamide biosynthesis. Catalyzes the demethylation of diphthine methyl ester to form diphthine, an intermediate in diphthamide biosynthesis, a post-translational modification of histidine which occurs in translation elongation factor 2 (EFT1 and EFT2). Also plays a role in the regulation of the retromer complex and is required for the recycling from endosomes of plasma membrane proteins like CAN1 and MUP1. Identified in a screen for mutants with decreased levels of rDNA transcription. This Saccharomyces cerevisiae (strain ATCC 204508 / S288c) (Baker's yeast) protein is Diphthine methyltransferase (RRT2).